A 493-amino-acid polypeptide reads, in one-letter code: Cobyric acid synthase (493 aa).

Positions 246 to 440 (PIDIAVIKMP…IHGVFDGVVF (195 aa)) constitute a GATase cobBQ-type domain. Cys-326 serves as the catalytic Nucleophile. His-432 is an active-site residue.

It belongs to the CobB/CobQ family. CobQ subfamily.

It participates in cofactor biosynthesis; adenosylcobalamin biosynthesis. Functionally, catalyzes amidations at positions B, D, E, and G on adenosylcobyrinic A,C-diamide. NH(2) groups are provided by glutamine, and one molecule of ATP is hydrogenolyzed for each amidation. In Clostridium botulinum (strain ATCC 19397 / Type A), this protein is Cobyric acid synthase.